A 377-amino-acid polypeptide reads, in one-letter code: 23S rRNA (uracil(747)-C(5))-methyltransferase RlmC (377 aa).

4 residues coordinate [4Fe-4S] cluster: Cys-3, Cys-11, Cys-14, and Cys-87. 4 residues coordinate S-adenosyl-L-methionine: Gln-212, Phe-241, Glu-262, and Asn-307. Cys-334 (nucleophile) is an active-site residue.

This sequence belongs to the class I-like SAM-binding methyltransferase superfamily. RNA M5U methyltransferase family. RlmC subfamily.

The enzyme catalyses uridine(747) in 23S rRNA + S-adenosyl-L-methionine = 5-methyluridine(747) in 23S rRNA + S-adenosyl-L-homocysteine + H(+). In terms of biological role, catalyzes the formation of 5-methyl-uridine at position 747 (m5U747) in 23S rRNA. The protein is 23S rRNA (uracil(747)-C(5))-methyltransferase RlmC of Photorhabdus laumondii subsp. laumondii (strain DSM 15139 / CIP 105565 / TT01) (Photorhabdus luminescens subsp. laumondii).